The following is a 277-amino-acid chain: Large ribosomal subunit protein uL2 (277 aa).

The interval 220–277 (VRGSVMNPNDHPHGGGEGKAPIGRPSPMSPWGKKTLGKKTRSSKARSEKLIIRHRKSR) is disordered. Residues 254–263 (TLGKKTRSSK) are compositionally biased toward basic residues.

It belongs to the universal ribosomal protein uL2 family. Part of the 50S ribosomal subunit. Forms a bridge to the 30S subunit in the 70S ribosome.

Its function is as follows. One of the primary rRNA binding proteins. Required for association of the 30S and 50S subunits to form the 70S ribosome, for tRNA binding and peptide bond formation. It has been suggested to have peptidyltransferase activity; this is somewhat controversial. Makes several contacts with the 16S rRNA in the 70S ribosome. The protein is Large ribosomal subunit protein uL2 of Latilactobacillus sakei subsp. sakei (strain 23K) (Lactobacillus sakei subsp. sakei).